Consider the following 494-residue polypeptide: Alpha-amylase-related protein (494 aa).

A signal peptide spans 1 to 20 (MFKFASAVILCVVAASSTLA). Q21 is modified (pyrrolidone carboxylic acid). An intrachain disulfide couples C48 to C104. Ca(2+) is bound by residues N118, Q169, and D178. A disulfide bridge links C157 with C171. Residue R206 participates in chloride binding. Residue D208 is the Nucleophile of the active site. Position 212 (H212) interacts with Ca(2+). Catalysis depends on E245, which acts as the Proton donor. N308 and R343 together coordinate chloride. Intrachain disulfides connect C376/C382, C418/C441, and C448/C460.

It belongs to the glycosyl hydrolase 13 family. As to quaternary structure, monomer. The cofactor is Ca(2+). Chloride is required as a cofactor.

The protein resides in the secreted. It catalyses the reaction Endohydrolysis of (1-&gt;4)-alpha-D-glucosidic linkages in polysaccharides containing three or more (1-&gt;4)-alpha-linked D-glucose units.. This Drosophila varians (Fruit fly) protein is Alpha-amylase-related protein (Amyrel).